Consider the following 139-residue polypeptide: Peptide methionine sulfoxide reductase B5 (139 aa).

The residue at position 2 (Ala2) is an N-acetylalanine. The MsrB domain maps to 12-133 (EEEWRAVLSP…NSVSISFNPA (122 aa)). Residues Cys51, Cys54, Cys97, and Cys100 each coordinate Zn(2+). A disulfide bond links Cys69 and Cys122. Residue Cys122 is the Nucleophile of the active site.

Belongs to the MsrB Met sulfoxide reductase family. It depends on Zn(2+) as a cofactor.

It is found in the cytoplasm. It localises to the cytosol. It carries out the reaction L-methionyl-[protein] + [thioredoxin]-disulfide + H2O = L-methionyl-(R)-S-oxide-[protein] + [thioredoxin]-dithiol. Functionally, catalyzes the reduction of methionine sulfoxide (MetSO) to methionine in proteins. Plays a protective role against oxidative stress by restoring activity to proteins that have been inactivated by methionine oxidation. MSRB family specifically reduces the MetSO R-enantiomer. The chain is Peptide methionine sulfoxide reductase B5 (MSRB5) from Arabidopsis thaliana (Mouse-ear cress).